Reading from the N-terminus, the 216-residue chain is Transmembrane emp24 domain-containing protein p24delta5 (216 aa).

Positions Met-1–Ala-27 are cleaved as a signal peptide. The Lumenal portion of the chain corresponds to Ile-28–Arg-183. The GOLD domain maps to Thr-38–Arg-151. A glycan (N-linked (GlcNAc...) asparagine) is linked at Asn-86. The stretch at Ala-137–Ile-159 forms a coiled coil. Omega-N-methylated arginine is present on residues Arg-169 and Arg-174. Residues Val-184–Leu-204 traverse the membrane as a helical segment. The Cytoplasmic portion of the chain corresponds to Tyr-205 to Ile-216. Positions Tyr-209–Phe-210 match the COPII vesicle coat-binding motif. The COPI vesicle coat-binding motif lies at Tyr-209–Ile-216.

Belongs to the EMP24/GP25L family. As to quaternary structure, probably oligomerizes with other members of the EMP24/GP25L family. Associates with the COPI vesicle coat (coatomer). Associates with the COPII vesicle coat (coatomer). Interacts with p24beta2.

The protein resides in the endoplasmic reticulum membrane. Functionally, involved in vesicular protein trafficking. Mainly functions in the early secretory pathway. Thought to act as cargo receptor at the lumenal side for incorporation of secretory cargo molecules into transport vesicles and to be involved in vesicle coat formation at the cytoplasmic side. Interacts with p24beta2 at endoplasmic reticulum export sites for endoplasmic reticulum exit and coupled transport to the Golgi apparatus. Once in the Golgi, interacts very efficiently with the COPI machinery for retrograde transport back to the endoplasmic reticulum. The chain is Transmembrane emp24 domain-containing protein p24delta5 from Arabidopsis thaliana (Mouse-ear cress).